The sequence spans 315 residues: Prephenate dehydratase (315 aa).

The 188-residue stretch at 3–190 folds into the Prephenate dehydratase domain; that stretch reads RIAYLGPQGT…ARTRFVLVGR (188 aa). Positions 204–281 constitute an ACT domain; that stretch reads SVALRLPNTP…EDVRYLGSWP (78 aa).

As to quaternary structure, homodimer.

The catalysed reaction is prephenate + H(+) = 3-phenylpyruvate + CO2 + H2O. Its pathway is amino-acid biosynthesis; L-phenylalanine biosynthesis; phenylpyruvate from prephenate: step 1/1. In Mycobacterium sp. (strain JLS), this protein is Prephenate dehydratase (pheA).